A 688-amino-acid chain; its full sequence is MDFITINSSNKTEEFALKQVAKQATSSLLYRLGKTIILASVCVEREPVSEDFLPLVVQFLEKSYAAGKIPGGFVKREGRAQDFEILTSRLIDRTLRPLFPKDYRYPTQITLMVLSHDIENDLQVSALNAASAALFLAHIAPIKSVSACRIARMDNEFIINPSASLLNQSSLDLFVSGTKESLNMIEMRSLGQKLNALEEPLMLEALELAQKSLEETCTLYEEIFTPHQNELFFKESQGIVFNERLLDLLKNQYFDEIIKGIESSALSERENVFNEIARKISEAHSEFSLEEIELSLEKVKKTEIRRMIIKDKIRPDKRALEEVRPILIESDLLPMAHSSILFTRGQTQSLVVGVLGTDNDAQTHESLEHKAPIKERFMFHYNFPPFCVGEASSIGAASRRELGHGNLAKRALETSIKNKEQVIRLVSEILESNGSSSMASVCAGSLALYASGVEIYDLVAGVAMGMVSEGQDHAILSDISGLEDAEGDMDFKIAGNLEGITAMQMDTKMSGIKLEILYQALLQAKEARKHILKIMHEAKEKIVINFSHLPTTEIFNVAPDKIVEIIGQGGRVIKEIVEKFEVKIDLNKPSGEVKIMGNKERVLKTKEFILNYLHSLDQELEQYAIDEVLEAQVKRIVDFGAFLSLPKGGEGLLRKQNMDKCQVVLKEGDSIRCRVISFNKGKIALDLA.

Mg(2+)-binding residues include aspartate 484 and aspartate 490. Residues 550–609 (PTTEIFNVAPDKIVEIIGQGGRVIKEIVEKFEVKIDLNKPSGEVKIMGNKERVLKTKEFI) form the KH domain. The 63-residue stretch at 626–688 (DEVLEAQVKR…NKGKIALDLA (63 aa)) folds into the S1 motif domain.

The protein belongs to the polyribonucleotide nucleotidyltransferase family. Mg(2+) is required as a cofactor.

It is found in the cytoplasm. It carries out the reaction RNA(n+1) + phosphate = RNA(n) + a ribonucleoside 5'-diphosphate. Its function is as follows. Involved in mRNA degradation. Catalyzes the phosphorolysis of single-stranded polyribonucleotides processively in the 3'- to 5'-direction. The chain is Polyribonucleotide nucleotidyltransferase from Helicobacter pylori (strain ATCC 700392 / 26695) (Campylobacter pylori).